The chain runs to 196 residues: UPF0340 protein TT_C0214 (196 aa).

This sequence belongs to the UPF0340 family.

The sequence is that of UPF0340 protein TT_C0214 from Thermus thermophilus (strain ATCC BAA-163 / DSM 7039 / HB27).